Here is a 175-residue protein sequence, read N- to C-terminus: Pycsar effector protein RsPycTM (175 aa).

3 consecutive transmembrane segments (helical) span residues 17-37, 44-64, and 146-166; these read AKNAALLTFCSVWMGAIITLL, PLGFDYAFKASLTVLFIAAII, and AGSLVLFAFGIMMVPPILFCI.

The protein resides in the cell inner membrane. Pycsar (pyrimidine cyclase system for antiphage resistance) provides immunity against bacteriophage. The pyrimidine cyclase (PycC) synthesizes cyclic nucleotides in response to infection; these serve as specific second messenger signals. The signals activate the nearby effector, leading to bacterial cell death and abortive phage infection. A clade A Pycsar system. In terms of biological role, the effector gene of a two-gene Pycsar system. Expression of this and uridylate cyclase RsPycC (AC A0A4R2TZQ0) probably confers resistance to bacteriophage. The genes are probably only expressed in response to bacteriophage infection. Probably only responds to cUMP (produced by its cognate NTP cyclase), acts by impairing membrane integrity. The polypeptide is Pycsar effector protein RsPycTM (Rhizobium sp. (strain PP-F2F-G36)).